Reading from the N-terminus, the 928-residue chain is Diacylglycerol kinase zeta (928 aa).

Residues 1-14 (MEPRDGSPEARSSD) show a composition bias toward basic and acidic residues. Disordered stretches follow at residues 1–46 (MEPR…RRFP) and 59–82 (KSGL…SERQ). Over residues 15 to 24 (SESASASSSG) the composition is skewed to low complexity. Residues 25–37 (SERDAGPEPDKAP) show a composition bias toward basic and acidic residues. 2 consecutive Phorbol-ester/DAG-type zinc fingers follow at residues 98 to 152 (HIWF…NFRC) and 172 to 230 (HHWV…EEPC). The segment at 251 to 280 (PQNTLKASKKKKRASFKRKSSKKGPEEGRW) is disordered. A compositionally biased stretch (basic residues) spans 257–272 (ASKKKKRASFKRKSSK). An MARCKS homology region spans residues 259-273 (KKKKRASFKRKSSKK). Residues 278 to 416 (GRWRPFIIRP…HVEEGNVVQL (139 aa)) are mediates interaction with RASGRP1. The DAGKc domain maps to 291 to 425 (PLMKPLLVFV…LDRWDLHAEP (135 aa)). Residues 361–369 (LSTLDQLRL) carry the Nuclear export signal motif. At Ser705 the chain carries Phosphoserine. The segment at 759–788 (ARPDLPTPTSPLPTSPCSPTPRSLQGDAAP) is disordered. Over residues 763–777 (LPTPTSPLPTSPCSP) the composition is skewed to pro residues. At Ser781 the chain carries Phosphoserine. ANK repeat units lie at residues 822–852 (QSRT…EILD) and 857–886 (NGET…SLMK). Residues 924–928 (QETAV) carry the PDZ-binding motif.

This sequence belongs to the eukaryotic diacylglycerol kinase family. In terms of assembly, interacts (via PDZ-binding motif) with the PDZ domain of the syntrophin SNTG1 and that of SNX27. Interacts with IRS1 in the absence of insulin; insulin stimulation decreases this interaction. Found in a ternary complex with IRS1 and PIP5K1A in the absence of insulin. Interacts with PIP5K1A. Forms a signaling complex with RASGRP1 and HRAS. In terms of processing, phosphorylation of the MARCKS homology domain by PKC reduces nuclear accumulation of DGK-zeta. In terms of tissue distribution, highest levels in brain, and substantial levels in skeletal muscle, heart, and pancreas. As to expression, predominantly expressed in muscle.

Its subcellular location is the nucleus. It localises to the cytoplasm. It is found in the cytosol. The protein resides in the cell membrane. The protein localises to the cell projection. Its subcellular location is the lamellipodium. It catalyses the reaction a 1,2-diacyl-sn-glycerol + ATP = a 1,2-diacyl-sn-glycero-3-phosphate + ADP + H(+). It carries out the reaction a 1-O-alkyl-sn-glycerol + ATP = a 1-O-alkyl-sn-glycero-3-phosphate + ADP + H(+). The enzyme catalyses 1-O-alkyl-2-acyl-sn-glycerol + ATP = 1-O-alkyl-2-acyl-sn-glycero-3-phosphate + ADP + H(+). The catalysed reaction is 1,2-didecanoyl-sn-glycerol + ATP = 1,2-didecanoyl-sn-glycero-3-phosphate + ADP + H(+). It catalyses the reaction 1,2-ditetradecanoyl-sn-glycerol + ATP = 1,2-ditetradecanoyl-sn-glycero-3-phosphate + ADP + H(+). It carries out the reaction 1-hexadecanoyl-2-(9Z-octadecenoyl)-sn-glycerol + ATP = 1-hexadecanoyl-2-(9Z-octadecenoyl)-sn-glycero-3-phosphate + ADP + H(+). The enzyme catalyses 1-hexadecanoyl-2-(5Z,8Z,11Z,14Z-eicosatetraenoyl)-sn-glycerol + ATP = 1-hexadecanoyl-2-(5Z,8Z,11Z,14Z-eicosatetraenoyl)-sn-glycero-3-phosphate + ADP + H(+). The catalysed reaction is 1-octadecanoyl-2-(9Z-octadecenoyl)-sn-glycerol + ATP = 1-octadecanoyl-2-(9Z-octadecenoyl)-sn-glycero-3-phosphate + ADP + H(+). It catalyses the reaction 1-octadecanoyl-2-(5Z,8Z,11Z,14Z-eicosatetraenoyl)-sn-glycerol + ATP = 1-octadecanoyl-2-(5Z,8Z,11Z,14Z-eicosatetraenoyl)-sn-glycero-3-phosphate + ADP + H(+). It carries out the reaction 1-octadecanoyl-2-(4Z,7Z,10Z,13Z,16Z,19Z-docosahexaenoyl)-sn-glycerol + ATP = 1-octadecanoyl-2-(4Z,7Z,10Z,13Z,16Z,19Z-docosahexaenoyl)-sn-glycero-3-phosphate + ADP + H(+). The enzyme catalyses 1,2-di-(9Z-octadecenoyl)-sn-glycerol + ATP = 1,2-di-(9Z-octadecenoyl)-sn-glycero-3-phosphate + ADP + H(+). The catalysed reaction is 1-(9Z-octadecenoyl)-2-hexadecanoyl-sn-glycerol + ATP = 1-(9Z)-octadecenoyl-2-hexadecanoyl-sn-glycero-3-phosphate + ADP + H(+). It catalyses the reaction 1-eicosanoyl-2-(5Z,8Z,11Z,14Z)-eicosatetraenoyl-sn-glycerol + ATP = 1-eicosanoyl-2-(5Z,8Z,11Z,14Z)-eicosatetraenoyl-sn-glycero-3-phosphate + ADP + H(+). It carries out the reaction 1,2-di-(5Z,8Z,11Z,14Z)-eicosatetraenoyl-sn-glycerol + ATP = 1,2-di-(5Z,8Z,11Z,14Z)-eicosatetraenoyl-sn-glycero-3-phosphate + ADP + H(+). The enzyme catalyses 1-O-hexadecyl-2-acetyl-sn-glycerol + ATP = 1-O-hexadecyl-2-acetyl-sn-glycero-3-phosphate + ADP + H(+). The catalysed reaction is 1-O-hexadecyl-2-(5Z,8Z,11Z,14Z-eicosatetraenoyl)-sn-glycerol + ATP = 1-O-hexadecyl-2-(5Z,8Z,11Z,14Z-eicosatetraenoyl)-sn-glycero-3-phosphate + ADP + H(+). It catalyses the reaction 1-O-hexadecyl-2-(9Z-octadecenoyl)-sn-glycerol + ATP = 1-O-hexadecyl-2-(9Z-octadecenoyl)-sn-glycero-3-phosphate + ADP + H(+). It carries out the reaction 1-O-hexadecyl-sn-glycerol + ATP = 1-O-hexadecyl-sn-glycero-3-phosphate + ADP + H(+). Its pathway is lipid metabolism; glycerolipid metabolism. With respect to regulation, activated by 1,2-diacyl-sn-glycero-3-phosphate/phosphatidic acid irrespective of its acyl chain composition. Diacylglycerol kinase that converts diacylglycerol/DAG into phosphatidic acid/phosphatidate/PA and regulates the respective levels of these two bioactive lipids. Thereby, acts as a central switch between the signaling pathways activated by these second messengers with different cellular targets and opposite effects in numerous biological processes. Also plays an important role in the biosynthesis of complex lipids. Does not exhibit an acyl chain-dependent substrate specificity among diacylglycerol species. Can also phosphorylate 1-alkyl-2-acylglycerol in vitro but less efficiently and with a preference for alkylacylglycerols containing an arachidonoyl group. The biological processes it is involved in include T cell activation since it negatively regulates T-cell receptor signaling which is in part mediated by diacylglycerol. By generating phosphatidic acid, stimulates PIP5KIA activity which regulates actin polymerization. Through the same mechanism could also positively regulate insulin-induced translocation of SLC2A4 to the cell membrane. In terms of biological role, regulates RASGRP1 activity. Its function is as follows. Does not regulate RASGRP1 activity. The protein is Diacylglycerol kinase zeta of Homo sapiens (Human).